Reading from the N-terminus, the 281-residue chain is MKQGLIGVLALALGATLLSSAVWAKTPWQEIAHPVAGTPQSIGSFSNGCIIGAQPLPLQSLDYQVMRVDQRRYFGHPDLLAFIHRLSTEVKRTTSGNVLVGDMGMPVGGRFSSGHASHQSGLDVDIWLQLPRQRWSEQQLLKPQPIDLVNASGLNVNPRVWRPEVTTLIKTAALDSDVTRIFVNPAIKKQLCAEAGHDRDWLRKVRPWFAHRAHMHVRLRCPADSLECQEQSEPPIGDGCGAELTSWFQPKQPSSEAPEKTTPPPLPPSCQALLDRHFAAR.

A signal peptide spans 1–24; the sequence is MKQGLIGVLALALGATLLSSAVWA. Cystine bridges form between Cys-49–Cys-270, Cys-192–Cys-240, and Cys-221–Cys-228. Positions 115, 118, 125, and 216 each coordinate Zn(2+). Residues 230–271 are disordered; sequence EQSEPPIGDGCGAELTSWFQPKQPSSEAPEKTTPPPLPPSCQ. Residues 246–255 show a composition bias toward polar residues; sequence SWFQPKQPSS.

This sequence belongs to the peptidase M74 family. Dimer. Zn(2+) is required as a cofactor.

Its subcellular location is the periplasm. Functionally, murein endopeptidase that cleaves the D-alanyl-meso-2,6-diamino-pimelyl amide bond that connects peptidoglycan strands. Likely plays a role in the removal of murein from the sacculus. In Pectobacterium atrosepticum (strain SCRI 1043 / ATCC BAA-672) (Erwinia carotovora subsp. atroseptica), this protein is Penicillin-insensitive murein endopeptidase (mepA).